The chain runs to 405 residues: Tryptophan synthase beta chain (405 aa).

The residue at position 98 (lysine 98) is an N6-(pyridoxal phosphate)lysine.

It belongs to the TrpB family. Tetramer of two alpha and two beta chains. Pyridoxal 5'-phosphate is required as a cofactor.

The enzyme catalyses (1S,2R)-1-C-(indol-3-yl)glycerol 3-phosphate + L-serine = D-glyceraldehyde 3-phosphate + L-tryptophan + H2O. It participates in amino-acid biosynthesis; L-tryptophan biosynthesis; L-tryptophan from chorismate: step 5/5. Its function is as follows. The beta subunit is responsible for the synthesis of L-tryptophan from indole and L-serine. This chain is Tryptophan synthase beta chain (trpB), found in Xylella fastidiosa (strain 9a5c).